We begin with the raw amino-acid sequence, 351 residues long: Soluble interferon alpha/beta receptor OPG204 (351 aa).

An N-terminal signal peptide occupies residues 1 to 23; sequence MKMKMMVRIYFVSLSLLLFHSYA. Ig-like C2-type domains follow at residues 65-137 and 155-237; these read LGEP…KNGD and PKTY…IVVS. Disulfide bonds link cysteine 73/cysteine 129 and cysteine 172/cysteine 221. N-linked (GlcNAc...) asparagine; by host glycosylation is found at asparagine 117, asparagine 182, asparagine 261, asparagine 269, and asparagine 321. Positions 246 to 345 constitute an Ig-like V-type domain; it reads PSQDHRFKLI…HNYYFDKTLT (100 aa). Cysteine 272 and cysteine 333 are joined by a disulfide.

The protein belongs to the interleukin-1 receptor family. In terms of assembly, interacts with host IFNA1.

The protein localises to the secreted. Functionally, counteracts the antiviral effects of host IFN-alpha/beta and key IFN-inducible proteins involved in viral RNA degradation suxh as host OAS1. Acts as a soluble IFN-alpha receptor and thus inhibits the interaction between host IFN-alpha and its receptor. This is Soluble interferon alpha/beta receptor OPG204 (OPG204) from Cynomys gunnisoni (Gunnison's prairie dog).